The following is a 156-amino-acid chain: MSQKDPYKTYRLVSDPFYESPLVTLLIMHVLRNGKKSISQRIVYSAIENIAMKVKEDPLEIIERAIKNVIPAVEIRSRRIGGSTYQVPTEVRVHRGISLSIRWVIKFAKIRPGKSMSLKLANELLDASKNLGNSIRKKEDTHKMAEANRAFAHYRY.

It belongs to the universal ribosomal protein uS7 family. In terms of assembly, part of the 30S ribosomal subunit.

The protein localises to the plastid. Its subcellular location is the chloroplast. Its function is as follows. One of the primary rRNA binding proteins, it binds directly to 16S rRNA where it nucleates assembly of the head domain of the 30S subunit. This chain is Small ribosomal subunit protein uS7c (rps7), found in Cyanidium caldarium (Red alga).